Consider the following 307-residue polypeptide: Agmatinase (307 aa).

The Mn(2+) site is built by histidine 128, aspartate 151, histidine 153, aspartate 155, aspartate 232, and aspartate 234.

The protein belongs to the arginase family. Agmatinase subfamily. It depends on Mn(2+) as a cofactor.

The enzyme catalyses agmatine + H2O = urea + putrescine. The protein operates within amine and polyamine biosynthesis; putrescine biosynthesis via agmatine pathway; putrescine from agmatine: step 1/1. Catalyzes the formation of putrescine from agmatine. The polypeptide is Agmatinase (Neisseria meningitidis serogroup A / serotype 4A (strain DSM 15465 / Z2491)).